We begin with the raw amino-acid sequence, 1531 residues long: Myosin-17 (1531 aa).

The 50-residue stretch at 8 to 57 (IVGSHVWIEDPGAAWIDGEVVKINGEEVHAHTTNGKTVVANIANVFPKDT) folds into the Myosin N-terminal SH3-like domain. A Myosin motor domain is found at 62–732 (GGVDDMTKLS…QMAELDARRA (671 aa)). ATP-binding positions include 156-163 (GESGAGKT) and 209-217 (NNNSSRFGK). Actin-binding stretches follow at residues 495–529 (LIEK…YQTF), 531–554 (NYKR…AGEV), 589–613 (FPRL…KLQL), and 613–635 (LQSL…KPNN). 5 consecutive IQ domains span residues 758–787 (LRGA…QAAA), 783–812 (RQAA…STIT), 806–835 (IRHS…MKAA), 831–860 (QMKA…AALS), and 854–883 (LQKA…AARD). Positions 884–1056 (TGALREAKDK…VLRQQALAIS (173 aa)) form a coiled coil. A disordered region spans residues 1071–1090 (LPRTPENGNYLNGGTKTTPD). The segment covering 1076–1090 (ENGNYLNGGTKTTPD) has biased composition (polar residues). Residues 1159 to 1470 (DRIIQTIATA…IANMRVMMTE (312 aa)) enclose the Dilute domain. S1517 carries the phosphoserine modification.

The protein belongs to the TRAFAC class myosin-kinesin ATPase superfamily. Myosin family. Plant myosin class XI subfamily. In terms of assembly, homodimer. Interacts with MYOB1, MYOB2 and MYOB3. Interacts with PHOX1 and PHOX2. Expressed ubiquitously.

The protein localises to the cytoplasm. Myosin heavy chain that is required for the cell cycle-regulated transport of various organelles and proteins for their segregation. Functions by binding with its tail domain to receptor proteins on organelles and exerting force with its N-terminal motor domain against actin filaments, thereby transporting its cargo along polarized actin cables. Involved in the tip growth of root hair cells and in the elongation of trichome stalk and branches. Plays a major role in trafficking of Golgi stacks, mitochondria and peroxisomes during root hair development. Acts as the primary contributor to ER streaming with a major role in the movement of Golgi bodies. Required for development of pavement cells, trichomes, and stigmatic papillae. Together with XI-F, required for the regulation of organ bending, such as gravitropic root bending. This chain is Myosin-17, found in Arabidopsis thaliana (Mouse-ear cress).